The chain runs to 221 residues: Vesicle transport v-SNARE 11 (221 aa).

Position 2 is an N-acetylserine (Ser-2). Topologically, residues Ser-2–Trp-198 are cytoplasmic. Residues Glu-32 to Ser-93 adopt a coiled-coil conformation. A helical; Anchor for type IV membrane protein transmembrane segment spans residues Thr-199–Leu-219. The Vesicular segment spans residues Thr-220 to Lys-221.

The protein belongs to the VTI1 family. As to quaternary structure, forms SNARE complexes with the t-SNAREs SYP51 and either SYP21 or SYP22 in the PVC, and with a much lower affinity with SYP61 in the TGN. Does not interact with SYP41, SYP42 or VPS45. Binds to EPSIN1. Interacts with SCYL2B. Expressed in roots, stems, flowers and leaves.

Its subcellular location is the golgi apparatus. The protein localises to the trans-Golgi network membrane. It localises to the prevacuolar compartment membrane. The protein resides in the vacuole membrane. Functions as a v-SNARE responsible for targeting AtELP-containing vesicles from the trans-Golgi network (TGN) to the prevacuolar compartment (PVC) and mediates liposome fusion. May be also involved in retrograde traffic to the cis-Golgi. Promotes the formation of vacuolar membrane 'bulbs'. Necessary to deliver proteins to the lytic vacuole, but seems not involved in storage proteins transport. Required for amyloplast sedimentation in the endodermis during shoot gravitropism, which are thus acting as statoliths. Expression in the endodermis is essential for the shoot gravitropic response, whereas expression in other tissues may be responsible for the correct stem and leaf shape. This is Vesicle transport v-SNARE 11 from Arabidopsis thaliana (Mouse-ear cress).